Here is a 530-residue protein sequence, read N- to C-terminus: Na(+)/H(+) antiporter NhaB (530 aa).

12 consecutive transmembrane segments (helical) span residues 13–33 (FLGKAPDWYKIAILSFLVINP), 34–54 (LVFFFVDPFTAGWLLVVEFIF), 90–110 (LVANIEVLLLLVFMVAGIYFM), 121–141 (ILIGIKSKTALSVAFCFTAAF), 145–165 (FLDALTVIAVVISVAVGFYAI), 205–225 (LLMHAGVGTALGGVMTMVGEP), 241–261 (FIIRMLPITAPVFICGILTCI), 306–326 (GLIAVWLIVGLALHLAAVGLI), 351–371 (EEALPFTALLAVFFAVVAVII), 393–413 (LALFYVANGLLSMVSDNVFVG), 455–475 (GQAAFLFLLTSALAPLIQLSY), and 481–501 (MALPYTIVLALVGMFGIIFFL).

This sequence belongs to the NhaB Na(+)/H(+) (TC 2.A.34) antiporter family.

The protein resides in the cell inner membrane. The catalysed reaction is 2 Na(+)(in) + 3 H(+)(out) = 2 Na(+)(out) + 3 H(+)(in). Its function is as follows. Na(+)/H(+) antiporter that extrudes sodium in exchange for external protons. This Aliivibrio fischeri (strain ATCC 700601 / ES114) (Vibrio fischeri) protein is Na(+)/H(+) antiporter NhaB.